A 943-amino-acid polypeptide reads, in one-letter code: Serine/threonine-protein kinase ATG1 (943 aa).

Residues 22–327 (FVIDKEIGKG…FEDFFHHPVI (306 aa)) form the Protein kinase domain. ATP-binding positions include 28–36 (IGKGSFAQV) and Lys51. Asp165 functions as the Proton acceptor in the catalytic mechanism. Disordered stretches follow at residues 334 to 468 (LVED…LTDE), 503 to 561 (QQGQ…SPGA), 774 to 800 (LPEE…GGQA), 858 to 888 (HLPK…SDDK), and 914 to 943 (AASK…SVPT). Positions 338–352 (DIPKPEKPVLAETKS) are enriched in basic and acidic residues. Over residues 517–529 (ATQQGHPTSTTGA) the composition is skewed to polar residues. Over residues 542-554 (RNDHYRKASHDKT) the composition is skewed to basic and acidic residues. Low complexity predominate over residues 919-928 (QQQQQQQQVV).

Belongs to the protein kinase superfamily. Ser/Thr protein kinase family. APG1/unc-51/ULK1 subfamily. Homodimer. Forms a ternary complex with ATG13 and ATG17.

It localises to the cytoplasm. The protein localises to the preautophagosomal structure membrane. The catalysed reaction is L-seryl-[protein] + ATP = O-phospho-L-seryl-[protein] + ADP + H(+). The enzyme catalyses L-threonyl-[protein] + ATP = O-phospho-L-threonyl-[protein] + ADP + H(+). In terms of biological role, serine/threonine protein kinase involved in the cytoplasm to vacuole transport (Cvt) and found to be essential in autophagy, where it is required for the formation of autophagosomes. Involved in the clearance of protein aggregates which cannot be efficiently cleared by the proteasome. Required for selective autophagic degradation of the nucleus (nucleophagy) as well as for mitophagy which contributes to regulate mitochondrial quantity and quality by eliminating the mitochondria to a basal level to fulfill cellular energy requirements and preventing excess ROS production. Also involved in endoplasmic reticulum-specific autophagic process, in selective removal of ER-associated degradation (ERAD) substrates. Plays a key role in ATG9 and ATG23 cycling through the pre-autophagosomal structure and is necessary to promote ATG18 binding to ATG9 through phosphorylation of ATG9. Catalyzes phosphorylation of ATG4, decreasing the interaction between ATG4 and ATG8 and impairing deconjugation of PE-conjugated forms of ATG8. The polypeptide is Serine/threonine-protein kinase ATG1 (Chaetomium globosum (strain ATCC 6205 / CBS 148.51 / DSM 1962 / NBRC 6347 / NRRL 1970) (Soil fungus)).